The sequence spans 445 residues: 8-amino-7-oxononanoate synthase (445 aa).

Substrate is bound at residue Arg40. Position 131–132 (131–132) interacts with pyridoxal 5'-phosphate; it reads GY. His156 contributes to the substrate binding site. Ser202, His230, and Thr258 together coordinate pyridoxal 5'-phosphate. Lys261 carries the N6-(pyridoxal phosphate)lysine modification. Thr377 serves as a coordination point for substrate. The segment at 408 to 445 is disordered; the sequence is ASEGQTRRDAEQPPRSLRSLPPEGAAASLGAARRETAA.

It belongs to the class-II pyridoxal-phosphate-dependent aminotransferase family. BioF subfamily. Homodimer. Pyridoxal 5'-phosphate is required as a cofactor.

It carries out the reaction 6-carboxyhexanoyl-[ACP] + L-alanine + H(+) = (8S)-8-amino-7-oxononanoate + holo-[ACP] + CO2. Its pathway is cofactor biosynthesis; biotin biosynthesis. In terms of biological role, catalyzes the decarboxylative condensation of pimeloyl-[acyl-carrier protein] and L-alanine to produce 8-amino-7-oxononanoate (AON), [acyl-carrier protein], and carbon dioxide. This chain is 8-amino-7-oxononanoate synthase, found in Burkholderia ambifaria (strain MC40-6).